We begin with the raw amino-acid sequence, 653 residues long: Exocyst complex component EXO70C1 (653 aa).

Composition is skewed to basic and acidic residues over residues 1 to 34 (MEKS…DELH), 159 to 177 (SREE…DGSN), and 438 to 451 (NKPE…QQQR). Disordered stretches follow at residues 1–50 (MEKS…HSLV), 159–190 (SREE…DSDR), and 432–456 (EANQ…DDEE).

This sequence belongs to the EXO70 family. In terms of assembly, interacts with ROH1A. Binds directly to B1L. Post-translationally, phosphorylated. In terms of tissue distribution, expressed in anthers, pollen and root trichoblast cells.

The protein localises to the cytoplasm. In terms of biological role, required for global plant growth and for male transmission. Involved in the regulation of tip growth of pollen tube. The sequence is that of Exocyst complex component EXO70C1 from Arabidopsis thaliana (Mouse-ear cress).